The primary structure comprises 232 residues: Chalcone--flavanone isomerase (232 aa).

Substrate contacts are provided by Thr50 and Ser192.

The protein belongs to the chalcone isomerase family.

The enzyme catalyses a chalcone = a flavanone.. Its pathway is secondary metabolite biosynthesis; flavonoid biosynthesis. Catalyzes the intramolecular cyclization of bicyclic chalcones into tricyclic (S)-flavanones. Responsible for the isomerization of 4,2',4',6'-tetrahydroxychalcone (also termed chalcone) into naringenin. In Saussurea medusa (Saw-wort), this protein is Chalcone--flavanone isomerase (CHI).